Reading from the N-terminus, the 641-residue chain is MIKLENIKKSFITGGVSSEVLKGINLEIKKGEFVAIIGQSGSGKSTLMNILGCLDTPTSGKYLLDSLDISKFKKDELSNLRLKKFGFIFQRYNLLSSNDTKSNVALPGIYAGMSKADRINRAKDILVKLGLETKFDTMPNHLSGGQQQRVSIARALMNGGEILLCDEPTGALDSSSGVMVMQILDSLHKDGHTIIVVTHDKDIAAWADRIIEIKDGNIISDTRKNSQIYELKQNLKEIKPSLKAIRDQFFESFVMSLGAIKSHKLRSFLTMLGIIIGIASVICVVALAKGSQQKILSDINNMGTNTITIFPGKGFGDMHSGRVRSLSIDDSNLLGKLDFVDFSTPRMNTSGLLTYANQSFSGSLRSGSEYSLAISGLKIEKGRDFTKDDIINSRSNIIIDQFTKDAFFKDVDPIGKVILFNKQPFTIVGLVKRDETSFSGDNLTVYAPYTTTMNKLTGDRDIRSIMLKLKDGVNAQVAEQSIIEVLKIRRGSKDFFTRNSDTIRQTIESTMNTMSLLISGIALISLMVGGIGVMNIMLVSVFERTKEIGIRMAIGAKSKDIMTQFLIEAILLCAIGGSIGIGLAYAIGYGFNVFGGDFKMIFSTASIFIALGVSSLIGIVFGYIPARNASKLNPIDALLRE.

The ABC transporter domain occupies 2-240 (IKLENIKKSF…LKQNLKEIKP (239 aa)). 38 to 45 (GQSGSGKS) contributes to the ATP binding site. The next 4 helical transmembrane spans lie at 268–288 (FLTMLGIIIGIASVICVVALA), 516–536 (LLISGIALISLMVGGIGVMNI), 565–585 (FLIEAILLCAIGGSIGIGLAY), and 601–621 (IFSTASIFIALGVSSLIGIVF).

It belongs to the ABC transporter superfamily. Macrolide exporter (TC 3.A.1.122) family. As to quaternary structure, homodimer.

It is found in the cell inner membrane. Non-canonical ABC transporter that contains transmembrane domains (TMD), which form a pore in the inner membrane, and an ATP-binding domain (NBD), which is responsible for energy generation. Confers resistance against macrolides. This is Macrolide export ATP-binding/permease protein MacB from Campylobacter fetus subsp. fetus (strain 82-40).